Here is a 215-residue protein sequence, read N- to C-terminus: Small ribosomal subunit protein uS5 (215 aa).

The segment at 1–62 is disordered; it reads MTDSSPQSNP…QERDSEWQER (62 aa). Residues 9-28 show a composition bias toward low complexity; that stretch reads NPNAVPGAADVPAAAEGQQQ. The span at 29 to 61 shows a compositional bias: basic and acidic residues; the sequence is EQRRGGGRGERGDRRGGRRGDRRNQERDSEWQE. The region spanning 59–122 is the S5 DRBM domain; sequence WQERVVQIRR…ADGKKHLVKV (64 aa).

It belongs to the universal ribosomal protein uS5 family. In terms of assembly, part of the 30S ribosomal subunit. Contacts proteins S4 and S8.

Its function is as follows. With S4 and S12 plays an important role in translational accuracy. Functionally, located at the back of the 30S subunit body where it stabilizes the conformation of the head with respect to the body. This is Small ribosomal subunit protein uS5 from Parasynechococcus marenigrum (strain WH8102).